Here is a 385-residue protein sequence, read N- to C-terminus: Xanthosine methyltransferase 2 (385 aa).

Tyr18 provides a ligand contact to S-adenosyl-L-homocysteine. 2 residues coordinate xanthosine: Asn21 and Asn25. The S-adenosyl-L-homocysteine site is built by Cys62, Asn67, Asp101, Leu102, Ser140, Phe141, and Cys157. Xanthosine is bound at residue Tyr158. Position 159 (Cys159) interacts with S-adenosyl-L-homocysteine. Xanthosine contacts are provided by His161 and Trp162. Asn179, Asp261, Phe263, and Asn264 together coordinate Mg(2+). Xanthosine contacts are provided by Ser329, Tyr334, and Tyr369.

The protein belongs to the methyltransferase superfamily. Type-7 methyltransferase family. Requires Mg(2+) as cofactor. As to expression, expressed at low levels in young leaves but not in mature leaves. Barely detectable in fruits (grains).

It catalyses the reaction xanthosine + S-adenosyl-L-methionine = 7-methylxanthosine + S-adenosyl-L-homocysteine. The protein operates within alkaloid biosynthesis. Involved in the biosynthesis of caffeine. Specific for xanthosine and could not use xanthosine 5'-monophosphate (XMP) as substrate. Catalyzes the 7-N-methylation activity of xanthosine, but does not have 1-N- or 3-N-methylation activity. The sequence is that of Xanthosine methyltransferase 2 from Coffea arabica (Arabian coffee).